Consider the following 361-residue polypeptide: MKKNLMLIFGGVSFEHEISCKSAYSIYLALLDLNKYNIYPVYIDKCTGIWYLLDSVSDPPKLIDIDVLPIVSLLPGIGIFSNNKNLDIDVVFPVVHGRTGEDGAIQGVLKVMDIPCIGAGIIGSAISSNKYFCKLLLKSFNIPLVPFIGFRQYDYFLDKEEVKRNVREALGYPVIVKPAVLGSSIGINVAYSENQIEFFIEEALKYDLTILIEKFIEAREIECSIIGNEKIKIFSPGEVIVQDFIFYDYDAKYSVIPGNSIIFNIPAQLETNQLLSIKEYAFLVYKNLELRGMARVDFFVEKKSGKIYLNEINTIPGFTDISMFAKMCSHDGLQFKDLVDNLINYAFQSYINRKKRINFED.

Positions 134–344 constitute an ATP-grasp domain; it reads KLLLKSFNIP…FKDLVDNLIN (211 aa). 167-222 serves as a coordination point for ATP; that stretch reads REALGYPVIVKPAVLGSSIGINVAYSENQIEFFIEEALKYDLTILIEKFIEAREIE. Positions 297, 311, and 313 each coordinate Mg(2+).

This sequence belongs to the D-alanine--D-alanine ligase family. The cofactor is Mg(2+). Requires Mn(2+) as cofactor.

It is found in the cytoplasm. The catalysed reaction is 2 D-alanine + ATP = D-alanyl-D-alanine + ADP + phosphate + H(+). Its pathway is cell wall biogenesis; peptidoglycan biosynthesis. Functionally, cell wall formation. In Borrelia garinii subsp. bavariensis (strain ATCC BAA-2496 / DSM 23469 / PBi) (Borreliella bavariensis), this protein is D-alanine--D-alanine ligase.